Here is a 776-residue protein sequence, read N- to C-terminus: LPS-assembly protein LptD (776 aa).

The signal sequence occupies residues 1-24 (MQHFSRTFLAASIATALFAPYAQA).

The protein belongs to the LptD family. As to quaternary structure, component of the lipopolysaccharide transport and assembly complex. Interacts with LptE and LptA.

The protein localises to the cell outer membrane. Together with LptE, is involved in the assembly of lipopolysaccharide (LPS) at the surface of the outer membrane. This is LPS-assembly protein LptD from Vibrio vulnificus (strain YJ016).